A 1144-amino-acid polypeptide reads, in one-letter code: Nitric oxide synthase, inducible (1144 aa).

The DINNN-motif; mediates interaction with SPSB1, SPSB2 and SPSB4 motif lies at 23–27; sequence DINNN. Positions 37–59 are disordered; sequence SPTIQDDPKSHQNGSPQLLTGTA. Polar residues predominate over residues 47 to 59; that stretch reads HQNGSPQLLTGTA. Cys104 and Cys109 together coordinate Zn(2+). Ser112 is a (6R)-L-erythro-5,6,7,8-tetrahydrobiopterin binding site. A heme b-binding site is contributed by Cys194. Gln257, Trp366, Tyr367, and Glu371 together coordinate L-arginine. 4 residues coordinate (6R)-L-erythro-5,6,7,8-tetrahydrobiopterin: Arg375, Ile456, Trp457, and Phe470. Heme b is bound at residue Tyr485. The tract at residues 509–529 is calmodulin-binding; it reads FRVLVKVVFFASMLMRKVMAS. In terms of domain architecture, Flavodoxin-like spans 533 to 671; sequence ATVLFATETG…AFRSWAVQTF (139 aa). Residues Thr539, Glu540, Thr541, Lys543, and Ser544 each coordinate FMN. Phosphotyrosine is present on Tyr569. Residues Ser585, Thr586, Ser622, Cys629, Glu655, and Gln659 each coordinate FMN. The region spanning 724-964 is the FAD-binding FR-type domain; the sequence is KNVFTMRLKS…VRSVSGFQLP (241 aa). Arg744 contacts NADP(+). FAD contacts are provided by His766, Arg900, Tyr902, Ser903, Thr918, and Ala920. NADP(+) is bound at residue Thr923. FAD contacts are provided by Tyr924, Val937, Cys938, and Ser939. 8 residues coordinate NADP(+): Thr978, Arg1011, Ser1040, Arg1041, Lys1047, Tyr1049, Gln1051, and Asp1084.

It belongs to the NOS family. In terms of assembly, homodimer. Interacts with NHERF1. Interacts with GAPDH. Interacts with S100A8 and S100A9 to form the iNOS-S100A8/9 transnitrosylase complex. Interacts with SPSB1, SPSB2 and SPSB4. Interacts with ELOC and CUL5 in the presence of SPSB1 or SPSB2 or SPSB4. Forms a complex with ASL, ASS1 and HSP90AA1; the complex regulates cell-autonomous L-arginine synthesis and citrulline recycling while channeling extracellular L-arginine to nitric oxide synthesis pathway. It depends on heme b as a cofactor. FAD is required as a cofactor. Requires FMN as cofactor. The cofactor is (6R)-L-erythro-5,6,7,8-tetrahydrobiopterin. Polyubiquitinated; mediated by SPSB1, SPSB2 and SPSB4, leading to proteasomal degradation. Macrophages.

Its subcellular location is the cytoplasm. It localises to the cytosol. It catalyses the reaction 2 L-arginine + 3 NADPH + 4 O2 + H(+) = 2 L-citrulline + 2 nitric oxide + 3 NADP(+) + 4 H2O. Its activity is regulated as follows. Not stimulated by calcium/calmodulin. Aspirin inhibits expression and function of this enzyme and effects may be exerted at the level of translational/post-translational modification and directly on the catalytic activity. Functionally, produces nitric oxide (NO) which is a messenger molecule with diverse functions throughout the body. In macrophages, NO mediates tumoricidal and bactericidal actions. Also has nitrosylase activity and mediates cysteine S-nitrosylation of cytoplasmic target proteins such PTGS2/COX2. As component of the iNOS-S100A8/9 transnitrosylase complex involved in the selective inflammatory stimulus-dependent S-nitrosylation of GAPDH implicated in regulation of the GAIT complex activity and probably multiple targets including ANXA5, EZR, MSN and VIM. Involved in inflammation, enhances the synthesis of pro-inflammatory mediators such as IL6 and IL8. This Mus musculus (Mouse) protein is Nitric oxide synthase, inducible (Nos2).